We begin with the raw amino-acid sequence, 349 residues long: MRVADFSFELPDSLIARHPLAERHGSRLLVLDGPTGALAHRQFPDLLDYLRPGDLMVFNNTRVIPARLFGQKASGGKLEVLVERVLDSHRVLAHVRASKAPKVGAVILIDGGGEAEMVARHDTLFELRFTEEVLPLLDRVGHMPLPPYIDRPDEGADRERYQTVYAQRAGAVAAPTAGLHFDEALLEKIADKGVERAFVTLHVGAGTFQPVRVDKIEDHHMHKEWLEVGQDVVDAIEACRARGGRVIAVGTTSVRSLESAARDGVLKAFSGDTDIFIYPGRPFHVVDALVTNFHLPESTLLMLVSAFAGYPETMAAYAAAVEHGYRFFSYGDAMFITRNPAPRGPEDQA.

The protein belongs to the QueA family. As to quaternary structure, monomer.

Its subcellular location is the cytoplasm. It carries out the reaction 7-aminomethyl-7-carbaguanosine(34) in tRNA + S-adenosyl-L-methionine = epoxyqueuosine(34) in tRNA + adenine + L-methionine + 2 H(+). The protein operates within tRNA modification; tRNA-queuosine biosynthesis. Functionally, transfers and isomerizes the ribose moiety from AdoMet to the 7-aminomethyl group of 7-deazaguanine (preQ1-tRNA) to give epoxyqueuosine (oQ-tRNA). The protein is S-adenosylmethionine:tRNA ribosyltransferase-isomerase of Pseudomonas putida (strain ATCC 700007 / DSM 6899 / JCM 31910 / BCRC 17059 / LMG 24140 / F1).